The sequence spans 289 residues: MILLQHAGLPPPKRPSSSPPMSVAARSTGALQLPPQKPFGQEASLPLAGEEEPPKGGEQDTALEELCKPLYCKLCNVTLNSAQQAQAHYQGKNHGKKLRNYYAANSCPPPARMSNAVEAVAAPAVSVPPQMGSFKPGGRVILATENDYCKLCDASFSSPAVAQAHYQGKNHAKRLRLAEAQSNSFSDSSEVGQRRTRKEGNEYKMMPNRRNMYAVQNNSAGPYFNPRSRQRIPRDLAMCVTPSGQFYCSMCNVGAGEEVEFRQHLESKQHKSKVSEQRYRNEMENLGYV.

Positions 1–59 (MILLQHAGLPPPKRPSSSPPMSVAARSTGALQLPPQKPFGQEASLPLAGEEEPPKGGEQ) are disordered. The segment covering 9–18 (LPPPKRPSSS) has biased composition (pro residues). Matrin-type zinc fingers lie at residues 70–100 (LYCK…KLRN) and 147–177 (DYCK…RLRL). Residues 180–191 (AQSNSFSDSSEV) show a composition bias toward polar residues. The tract at residues 180–200 (AQSNSFSDSSEVGQRRTRKEG) is disordered. The Matrin-type 3 zinc finger occupies 246–276 (FYCSMCNVGAGEEVEFRQHLESKQHKSKVSE).

As to quaternary structure, interacts with dsRNA.

It is found in the nucleus. The protein resides in the nucleolus. Functionally, acts as a bona fide target gene of p53/TP53. May play a role in the TP53-dependent growth regulatory pathway. May contribute to TP53-mediated apoptosis by regulation of TP53 expression and translocation to the nucleus and nucleolus. The polypeptide is Zinc finger matrin-type protein 3 (Bos taurus (Bovine)).